A 730-amino-acid chain; its full sequence is Catalase R (730 aa).

His-105 is an active-site residue. A heme-binding site is contributed by Tyr-392. The disordered stretch occupies residues 403–433; the sequence is PNFEQIPVNRPRKPVHNNNRDGFGQQQIPTN.

Belongs to the catalase family. Requires heme as cofactor.

The catalysed reaction is 2 H2O2 = O2 + 2 H2O. In terms of biological role, occurs in almost all aerobically respiring organisms and serves to protect cells from the toxic effects of hydrogen peroxide. The polypeptide is Catalase R (catR) (Aspergillus niger).